Here is a 1001-residue protein sequence, read N- to C-terminus: O-GlcNAcase NagJ (1001 aa).

The signal sequence occupies residues 1–30 (MKRKMLKRLLTSAFACMFIANGLITTTVRA). Residues 179-469 (VSARGIVEGF…WNRAIDMLYG (291 aa)) form a catalytic domain region. Positions 180 to 452 (SARGIVEGFY…TAADYSWNMD (273 aa)) constitute a GH84 domain. A protein is bound by residues G187, K218, and D297. Residue D298 is the Proton donor of the active site. A protein contacts are provided by residues Y335, 394–396 (WWN), D401, and N429. 2 coiled-coil regions span residues 515-543 (KEDASALIEELYGEFARMEEACNNLKANL) and 573-597 (VAQLNEDTEAYESAKEIAQNKLNTA). Residues 916 to 1001 (PVRDFKASEI…KESLTLRTAR (86 aa)) enclose the Fibronectin type-III domain.

This sequence belongs to the glycosyl hydrolase 84 family.

It carries out the reaction 3-O-(N-acetyl-beta-D-glucosaminyl)-L-seryl-[protein] + H2O = N-acetyl-D-glucosamine + L-seryl-[protein]. The catalysed reaction is 3-O-(N-acetyl-beta-D-glucosaminyl)-L-threonyl-[protein] + H2O = L-threonyl-[protein] + N-acetyl-D-glucosamine. Inhibited by O-(2-acetamido-2-deoxy-D-glucopyranosylidene)amino-N-phenyl-carbamate (PUGNAc) and streptozotocin. In terms of biological role, binds carbohydrates. Capable of hydrolyzing the glycosidic link of O-GlcNAcylated proteins. Can bind and deglycosylate O-glycosylated peptides from mammals. The chain is O-GlcNAcase NagJ (nagJ) from Clostridium perfringens (strain ATCC 13124 / DSM 756 / JCM 1290 / NCIMB 6125 / NCTC 8237 / Type A).